Consider the following 177-residue polypeptide: Large ribosomal subunit protein uL6 (177 aa).

It belongs to the universal ribosomal protein uL6 family. Part of the 50S ribosomal subunit.

Its function is as follows. This protein binds to the 23S rRNA, and is important in its secondary structure. It is located near the subunit interface in the base of the L7/L12 stalk, and near the tRNA binding site of the peptidyltransferase center. The protein is Large ribosomal subunit protein uL6 of Bordetella pertussis (strain Tohama I / ATCC BAA-589 / NCTC 13251).